The following is a 165-amino-acid chain: Small ribosomal subunit protein bS16 (165 aa).

A disordered region spans residues 84–165; that stretch reads WTHGNNPEKG…EAPAEEAAEG (82 aa). The segment covering 89 to 130 has biased composition (basic and acidic residues); sequence NPEKGKPGKKAQERLAERAQREEERKQAEADAKAAAEAEKAA. Low complexity predominate over residues 131–157; the sequence is AAEAAAAAAAAPAVEEAPAEEAPAAEA.

This sequence belongs to the bacterial ribosomal protein bS16 family.

The sequence is that of Small ribosomal subunit protein bS16 from Caulobacter vibrioides (strain ATCC 19089 / CIP 103742 / CB 15) (Caulobacter crescentus).